Here is a 585-residue protein sequence, read N- to C-terminus: MVEAGEIGGAAVFALAAAAALSAASSLGAVDFRRPLAAVGGGGAFEWDGVVPWLIGVLGGGDEAAAGGVSVGVAAWYEVWVRVRGGVIAPTLQVAVWVCMVMSVMLVVEATFNSAVSLGVKAIGWRPEWRFKWEPLAGADEEKGRGEYPMVMVQIPMYNELEVYKLSIGAACELKWPKDKLIVQVLDDSTDPFIKNLVELECESWASKGVNIKYVTRSSRKGFKAGALKKGMECDYTKQCEYIAIFDADFQPEPNFLLRTVPFLMHNPNVALVQARWAFVNDTTSLLTRVQKMFFDYHFKVEQEAGSATFAFFSFNGTAGVWRTTAINEAGGWKDRTTVEDMDLAVRASLNGWKFIYVGDIRVKSELPSTYGAYCRQQFRWACGGANLFRKIAMDVLVAKDISLLKKFYMLYSFFLVRRVVAPMVACVLYNIIVPLSVMIPELFIPIWGVAYIPMALLIITTIRNPRNLHIMPFWILFESVMTVLRMRAALTGLMELSGFNKWTVTKKIGSSVEDTQVPLLPKTRKRLRDRINLPEIGFSVFLIFCASYNLIFHGKTSYYFNLYLQGLAFLLLGFNFTGNFACCQ.

The chain crosses the membrane as a helical span at residues 87-107 (VIAPTLQVAVWVCMVMSVMLV). Residue D188 is part of the active site. Substrate-binding residues include D247 and D249. D341 is an active-site residue. The next 4 membrane-spanning stretches (helical) occupy residues 420–440 (VVAP…SVMI), 443–463 (LFIP…ITTI), 534–554 (LPEI…LIFH), and 563–583 (LYLQ…NFAC).

This sequence belongs to the glycosyltransferase 2 family. Plant cellulose synthase-like A subfamily.

It localises to the golgi apparatus membrane. It catalyses the reaction GDP-mannose + (glucomannan)n = GDP + (glucomannan)n+1.. Functionally, probable mannan synthase which consists of a 4-beta-mannosyltransferase activity on mannan using GDP-mannose. The beta-1,4-mannan product is the backbone for galactomannan synthesis by galactomannan galactosyltransferase. Galactomannan is a noncellulosic polysaccharides of plant cell wall. The polypeptide is Probable glucomannan 4-beta-mannosyltransferase 7 (Oryza sativa subsp. japonica (Rice)).